A 263-amino-acid polypeptide reads, in one-letter code: Palmitoyltransferase ZDHHC22 (263 aa).

Residues 1-9 (MLALRLLNV) lie on the Cytoplasmic side of the membrane. The helical transmembrane segment at 10–30 (VAPAYFLCISLVTFVLQLFLF) threads the bilayer. Residues 31–47 (LPSMREDPTATPLFSPA) lie on the Lumenal side of the membrane. Residues 48-68 (VLHGALFLFLSANALGNYILV) form a helical membrane-spanning segment. The Cytoplasmic portion of the chain corresponds to 69–125 (VQNSPDDLGACQGTSSQRPQRPPPSTHFCRVCARVTLRHDHHCFFTGNCIGSRNMRN). One can recognise a DHHC domain in the interval 91 to 131 (PPSTHFCRVCARVTLRHDHHCFFTGNCIGSRNMRNFILFCL). Cys111 (S-palmitoyl cysteine intermediate) is an active-site residue. 2 helical membrane-spanning segments follow: residues 126 to 146 (FILFCLYTSLACLYSMVAGVA) and 147 to 167 (YISAVLSISFAHPLAFLTLLP). Topologically, residues 168–182 (TSISQFFSGAVLGSD) are cytoplasmic. Residues 183 to 203 (MFVILMLYLWFAVGLACAGFC) traverse the membrane as a helical segment. Residues 204–263 (CHQLLLILRGQTRYQVRKGVAVRARPWRKNLQEVFGKRWLLGLLVPMFNVGTESSKQQDK) are Lumenal-facing.

It belongs to the DHHC palmitoyltransferase family. As to quaternary structure, interacts with CNN3.

It is found in the endoplasmic reticulum membrane. It localises to the golgi apparatus membrane. The enzyme catalyses L-cysteinyl-[protein] + hexadecanoyl-CoA = S-hexadecanoyl-L-cysteinyl-[protein] + CoA. In terms of biological role, palmitoyltransferase that could catalyze the addition of palmitate onto various protein substrates and be involved in a variety of cellular processes. Catalyzes the palmitoylation of KCNMA1, regulating localization of KCNMA1 to the plasma membrane. Might also mediate palmitoylation of CNN3. The protein is Palmitoyltransferase ZDHHC22 of Rattus norvegicus (Rat).